An 888-amino-acid polypeptide reads, in one-letter code: Alanine--tRNA ligase (888 aa).

Residues His-564, His-568, Cys-676, and His-680 each contribute to the Zn(2+) site.

It belongs to the class-II aminoacyl-tRNA synthetase family. The cofactor is Zn(2+).

The protein resides in the cytoplasm. It carries out the reaction tRNA(Ala) + L-alanine + ATP = L-alanyl-tRNA(Ala) + AMP + diphosphate. Its function is as follows. Catalyzes the attachment of alanine to tRNA(Ala) in a two-step reaction: alanine is first activated by ATP to form Ala-AMP and then transferred to the acceptor end of tRNA(Ala). Also edits incorrectly charged Ser-tRNA(Ala) and Gly-tRNA(Ala) via its editing domain. The chain is Alanine--tRNA ligase from Mesorhizobium japonicum (strain LMG 29417 / CECT 9101 / MAFF 303099) (Mesorhizobium loti (strain MAFF 303099)).